Reading from the N-terminus, the 108-residue chain is Glutaredoxin-1 (108 aa).

The Glutaredoxin domain maps to Glu3–Arg106. A disulfide bond links Cys23 and Cys26.

Belongs to the glutaredoxin family.

Its subcellular location is the virion. Functionally, displays thioltransferase and dehydroascorbate reductase activities. This is Glutaredoxin-1 (OPG075) from Cynomys gunnisoni (Gunnison's prairie dog).